A 182-amino-acid chain; its full sequence is Phospholipase A2 inhibitor gamma subunit A2 (182 aa).

8 disulfide bridges follow: C3–C27, C6–C13, C20–C48, C54–C75, C76–C81, C99–C124, C117–C146, and C150–C172. N157 is a glycosylation site (N-linked (GlcNAc...) asparagine).

It belongs to the CNF-like-inhibitor family. Heterodimer of subunit A and subunit B.

It localises to the secreted. Functionally, phospholipase A2 (PA2) inhibitor. Inhibits the enzymatic activity of PA2 of Deinagkistrodon acutus. Also shows a wide anti-hemorrhage activities to D.acutus, Naja atra and Agkistrodon halys venom. The native protein is more potent than the recombinant one. This is Phospholipase A2 inhibitor gamma subunit A2 from Trimerodytes annularis (Red-bellied annulate keelback).